Here is a 288-residue protein sequence, read N- to C-terminus: MPVEEFVAGWISGALGLVLGHPFDTVKVRLQTQTTYRGIVDCMVKIYRHESLLGFFKGMSFPIASIAVVNSVLFGVYSNTLLVLTATSHQERRAQPPSYMHIFLAGCTGGFLQAYCLAPFDLIKVRLQNQTEPRAQPGSPPPRYQGPVHCAASIFREEGPRGLFRGAWALTLRDTPTVGIYFITYEGLCRQYTPEGQNPSSATVLVAGGFAGIASWVAATPLDMIKSRMQMDGLRRRVYQGMLDCMVSSIRQEGLGVFFRGVTINSARAFPVNAVTFLSYEYLLRWWG.

Solcar repeat units lie at residues 1 to 83 (MPVE…TLLV), 97 to 191 (PSYM…LCRQ), and 199 to 286 (PSSA…LLRW). A run of 6 helical transmembrane segments spans residues 6–26 (FVAG…FDTV), 63–83 (IASI…TLLV), 100–120 (MHIF…LAPF), 166–186 (GAWA…ITYE), 202–222 (ATVL…ATPL), and 266–286 (SARA…LLRW).

The protein belongs to the mitochondrial carrier (TC 2.A.29) family.

Its subcellular location is the mitochondrion inner membrane. This Homo sapiens (Human) protein is Solute carrier family 25 member 45 (SLC25A45).